A 1425-amino-acid polypeptide reads, in one-letter code: Nephrocystin-4 (1425 aa).

Phosphoserine is present on Ser-145. The interval 448 to 554 (FSLSSDGPTE…VSHLEADLSQ (107 aa)) is disordered. Composition is skewed to low complexity over residues 473-484 (PASPSGTPAPAA) and 507-530 (SPLS…SQSP). The tract at residues 822 to 1425 (LTLANVGHAC…ETFCVKVLYQ (604 aa)) is sufficient for basal bodies localization.

It belongs to the NPHP4 family. As to quaternary structure, interacts with NPHP1 and RPGRIP1L/NPHP8; NPHP1, NPHP4 and RPGRIP1L are proposed to form a functional NPHP1-4-8 module localized to cell-cell contacts and the ciliary transition zone; NPHP4 mediates the interaction between NPHP1 and RPGRIP1L. Interacts with IQCB1/NPHP5; the interaction likely requires additional interactors. Interacts with RPGRIP1, CEP164, JADE1, PALS1, INADL, PARD6A, INVS, DVL2. Interacts with INTU; INTU mediates the interaction between NPHP4 and DAAM1. Interacts with JADE1. Interacts with SPATA7. As to expression, expressed in the retina (at protein level).

The protein localises to the cytoplasm. The protein resides in the cytoskeleton. It localises to the cilium basal body. It is found in the microtubule organizing center. Its subcellular location is the centrosome. The protein localises to the cell junction. The protein resides in the tight junction. Functionally, involved in the organization of apical junctions; the function is proposed to implicate a NPHP1-4-8 module. Does not seem to be strictly required for ciliogenesis. Required for building functional cilia. Involved in the organization of the subapical actin network in multiciliated epithelial cells. Seems to recruit INT to basal bodies of motile cilia which subsequently interacts with actin-modifying proteins such as DAAM1. In cooperation with INVS may down-regulate the canonical Wnt pathway and promote the Wnt-PCP pathway by regulating expression and subcellular location of disheveled proteins. Stabilizes protein levels of JADE1 and promotes its translocation to the nucleus leading to cooperative inhibition of canonical Wnt signaling. Acts as negative regulator of the hippo pathway by association with LATS1 and modifying LATS1-dependent phosphorylation and localization of WWTR1/TAZ. This chain is Nephrocystin-4 (Nphp4), found in Mus musculus (Mouse).